The chain runs to 216 residues: Orotate phosphoribosyltransferase (216 aa).

5-phospho-alpha-D-ribose 1-diphosphate-binding positions include Arg-101, Lys-105, His-107, and 127-135 (EDLISTGGS). Ser-131 provides a ligand contact to orotate.

This sequence belongs to the purine/pyrimidine phosphoribosyltransferase family. PyrE subfamily. In terms of assembly, homodimer. Mg(2+) is required as a cofactor.

The catalysed reaction is orotidine 5'-phosphate + diphosphate = orotate + 5-phospho-alpha-D-ribose 1-diphosphate. Its pathway is pyrimidine metabolism; UMP biosynthesis via de novo pathway; UMP from orotate: step 1/2. In terms of biological role, catalyzes the transfer of a ribosyl phosphate group from 5-phosphoribose 1-diphosphate to orotate, leading to the formation of orotidine monophosphate (OMP). The protein is Orotate phosphoribosyltransferase of Cutibacterium acnes (strain DSM 16379 / KPA171202) (Propionibacterium acnes).